Reading from the N-terminus, the 409-residue chain is uncharacterized protein (409 aa).

Disordered stretches follow at residues 12–32 (ENTE…LHCP), 133–160 (EVST…SREQ), and 194–213 (TVSS…GLST). A compositionally biased stretch (polar residues) spans 134–160 (VSTQKSWSSEKNWSGLSQGPGTASREQ).

This is an uncharacterized protein from Mus musculus (Mouse).